A 185-amino-acid polypeptide reads, in one-letter code: Disulfide bond formation protein B (185 aa).

Residues 1-25 (MLLFFVILGIFVLTILKAISKQRWS) are Cytoplasmic-facing. Residues 26-42 (WLLLAASALSLELSALY) traverse the membrane as a helical segment. Topologically, residues 43-60 (FQHVMQLEPCVMCVYERL) are periplasmic. A disulfide bridge links cysteine 52 with cysteine 55. The chain crosses the membrane as a helical span at residues 61 to 76 (AMLGILLAGLIGASSP). At 77 to 83 (NNVFIRL) the chain is on the cytoplasmic side. Residues 84–101 (SAFLLWGISAVWGILLAI) form a helical membrane-spanning segment. The Periplasmic segment spans residues 102-156 (KHTDYQLHPSPFFTCDFFPNFPAWAPLHEWLPWLFNPTGDCSDIVWQFLGYSMPQ). Cysteine 116 and cysteine 142 are disulfide-bonded. The chain crosses the membrane as a helical span at residues 157-175 (WLIVSFSLYTLLFIIFAIS). Residues 176-185 (AVLKTKKQLF) lie on the Cytoplasmic side of the membrane.

This sequence belongs to the DsbB family.

Its subcellular location is the cell inner membrane. Required for disulfide bond formation in some periplasmic proteins. Acts by oxidizing the DsbA protein. The protein is Disulfide bond formation protein B of Psychromonas ingrahamii (strain DSM 17664 / CCUG 51855 / 37).